Consider the following 247-residue polypeptide: Triosephosphate isomerase (247 aa).

Substrate is bound at residue 9-11 (NWK). The Electrophile role is filled by histidine 94. The active-site Proton acceptor is the glutamate 165. Residues glycine 171, serine 209, and 230–231 (GG) each bind substrate.

The protein belongs to the triosephosphate isomerase family. In terms of assembly, homodimer.

The protein localises to the cytoplasm. The enzyme catalyses D-glyceraldehyde 3-phosphate = dihydroxyacetone phosphate. It functions in the pathway carbohydrate biosynthesis; gluconeogenesis. The protein operates within carbohydrate degradation; glycolysis; D-glyceraldehyde 3-phosphate from glycerone phosphate: step 1/1. In terms of biological role, involved in the gluconeogenesis. Catalyzes stereospecifically the conversion of dihydroxyacetone phosphate (DHAP) to D-glyceraldehyde-3-phosphate (G3P). The sequence is that of Triosephosphate isomerase from Albidiferax ferrireducens (strain ATCC BAA-621 / DSM 15236 / T118) (Rhodoferax ferrireducens).